A 132-amino-acid chain; its full sequence is Small ribosomal subunit protein uS8 (132 aa).

The protein belongs to the universal ribosomal protein uS8 family. As to quaternary structure, part of the 30S ribosomal subunit. Contacts proteins S5 and S12.

Functionally, one of the primary rRNA binding proteins, it binds directly to 16S rRNA central domain where it helps coordinate assembly of the platform of the 30S subunit. In Streptococcus equi subsp. equi (strain 4047), this protein is Small ribosomal subunit protein uS8.